We begin with the raw amino-acid sequence, 146 residues long: MGAFTEKQEALVNSSWEAFKGNIPQYSVVFYTSILEKAPAAKNLFSFLANGVDPTNPKLTAHAESLFGLVRDSAAQLRANGAVVADAALGSIHSQKALNDSQFLVVKEALLKTLKEAVGDKWTDELSTALELAYDEFAAGIKKAYA.

The 144-residue stretch at 3 to 146 (AFTEKQEALV…FAAGIKKAYA (144 aa)) folds into the Globin domain. 2 positions are modified to nitrated tyrosine: Y26 and Y31. S46 is a heme b binding site. At S46 the chain carries Phosphoserine. H62 serves as a coordination point for O2. H93 and K96 together coordinate heme b. Residue Y134 is modified to Nitrated tyrosine.

The protein belongs to the plant globin family. In terms of assembly, monomer. Nitrated mainly at Tyr-31 and, to a lower extent, at Tyr-26 and Tyr-134, in effective nodules and particularly in hypoxic conditions; this mechanism may play a protective role in the symbiosis by buffering toxic peroxynitrite NO(2)(-). Nitration level decrease during nodule senescence. Post-translationally, phosphorylation at Ser-46 disrupts the molecular environment of its porphyrin ring oxygen binding pocket, thus leading to a reduced oxygen consumption and to the delivery of oxygen O(2) to symbiosomes. As to expression, root nodules.

The protein localises to the cytoplasm. It is found in the cytosol. The protein resides in the nucleus. Its function is as follows. Leghemoglobin that reversibly binds oxygen O(2) through a pentacoordinated heme iron. In root nodules, facilitates the diffusion of oxygen to the bacteroids while preventing the bacterial nitrogenase from being inactivated by buffering dioxygen, nitric oxide and carbon monoxide, and promoting the formation of reactive oxygen species (ROS, e.g. H(2)O(2)). This role is essential for symbiotic nitrogen fixation (SNF). The chain is Leghemoglobin from Phaseolus vulgaris (Kidney bean).